Here is a 145-residue protein sequence, read N- to C-terminus: Putative esterase PA1618 (145 aa).

This sequence belongs to the thioesterase PaaI family.

The polypeptide is Putative esterase PA1618 (Pseudomonas aeruginosa (strain ATCC 15692 / DSM 22644 / CIP 104116 / JCM 14847 / LMG 12228 / 1C / PRS 101 / PAO1)).